We begin with the raw amino-acid sequence, 460 residues long: Antizyme inhibitor 2 (460 aa).

The segment at 117–140 is necessary for polyamine uptake stimulation; the sequence is QIAQIKYAAKHGIQLLSFDNEMEL.

It belongs to the Orn/Lys/Arg decarboxylase class-II family. ODC antizyme inhibitor subfamily. Monomer. Interacts with OAZ1, OAZ2 and OAZ3; this interaction disrupts the interaction between the antizyme and ODC1. Does not form a heterodimer with ODC1. Post-translationally, ubiquitinated, leading to its proteasomal degradation; a process that is reduced in presence of antizymes. May also be degraded through the lysosomal degradative pathway in a proteasomal-independent manner. Expressed in the neocortex, thalamus, hippocampus, cerebellum, medulla oblongata, gray and white matter. Expressed in neurons, oligodendrocytes, basket, Purkinje and pyramidal cells. Expressed in spermatocytes and Leydig cells of the testis. Expressed in luteal theca cells lining corpus luteum cysts and in hilus cells of the ovary. Expressed in primary and neoplastic mast cells (MC) (at protein level). Highly expressed in brain. Also expressed in testis.

It is found in the nucleus. It localises to the cytoplasm. Its subcellular location is the perinuclear region. The protein localises to the membrane. The protein resides in the cytoplasmic vesicle. It is found in the endoplasmic reticulum-Golgi intermediate compartment. It localises to the golgi apparatus. Its subcellular location is the cis-Golgi network. The protein localises to the trans-Golgi network. The protein resides in the cytoplasmic granule. It is found in the cell projection. It localises to the axon. Its subcellular location is the dendrite. The protein localises to the perikaryon. In terms of biological role, antizyme inhibitor (AZI) protein that positively regulates ornithine decarboxylase (ODC) activity and polyamine uptake. AZI is an enzymatically inactive ODC homolog that counteracts the negative effect of ODC antizymes (AZs) OAZ1, OAZ2 and OAZ3 on ODC activity by competing with ODC for antizyme-binding. Inhibits antizyme-dependent ODC degradation and releases ODC monomers from their inactive complex with antizymes, leading to formation of the catalytically active ODC homodimer and restoring polyamine production. Participates in the morphological integrity of the trans-Golgi network (TGN) and functions as a regulator of intracellular secretory vesicle trafficking. This Homo sapiens (Human) protein is Antizyme inhibitor 2 (AZIN2).